A 35-amino-acid chain; its full sequence is Cupiennin-2e (35 aa).

E35 carries the post-translational modification Glutamic acid 1-amide.

Expressed by the venom gland.

The protein localises to the secreted. This chain is Cupiennin-2e, found in Cupiennius salei (American wandering spider).